Here is a 201-residue protein sequence, read N- to C-terminus: Recombination protein RecR (201 aa).

A C4-type zinc finger spans residues 57–72 (CKYCANFTNKDECDIC). The 97-residue stretch at 80–176 (TKLMIVTTNE…QIYRIGFGIP (97 aa)) folds into the Toprim domain.

Belongs to the RecR family.

Its function is as follows. May play a role in DNA repair. It seems to be involved in an RecBC-independent recombinational process of DNA repair. It may act with RecF and RecO. The polypeptide is Recombination protein RecR (Ureaplasma parvum serovar 3 (strain ATCC 27815 / 27 / NCTC 11736)).